A 726-amino-acid polypeptide reads, in one-letter code: Endo-1,4-beta-xylanase/feruloyl esterase (726 aa).

The first 19 residues, 1–19 (MKKLLVALSLIAGSLTASA), serve as a signal peptide directing secretion. One can recognise a GH10 domain in the interval 27-369 (YAAGPGLKDA…KRSLQIIRDF (343 aa)). The Proton donor; for xylanase activity role is filled by Glu161. Glu280 (nucleophile; for xylanase activity) is an active-site residue. The segment at 370 to 726 (DAAMDNRKPK…LEKMAQSLFK (357 aa)) is feruloyl esterase. The active-site Nucleophile; for esterase activity is Ser629.

This sequence in the N-terminal section; belongs to the glycosyl hydrolase 10 (cellulase F) family. Monomer or homodimer.

The enzyme catalyses Endohydrolysis of (1-&gt;4)-beta-D-xylosidic linkages in xylans.. It catalyses the reaction feruloyl-polysaccharide + H2O = ferulate + polysaccharide.. The protein operates within glycan degradation; xylan degradation. Functionally, involved in degradation of plant cell wall polysaccharides. Has endo-xylanase activity towards substrates such as oat spelt xylan (OSX), acetylated xylo-oligosaccharides and acetylated xylan, producing primarily xylobiose; cannot hydrolyze xylobiose to xylose. Also has feruloyl esterase activity, releasing ferulic acid from methylferulate, and from the more natural substrates wheat bran, corn fiber, and XOS(FA,Ac), a corn fiber-derived substrate enriched in O-acetyl and ferulic acid esters. Exhibits negligible acetyl esterase activity on sugar acetates. Acts synergistically with Xyl3A to increase the release of xylose from xylan. Does not possess endoglucanase or mannanase activities since it is not able to hydrolyze carboxymethyl cellulose and locust bean gum. The polypeptide is Endo-1,4-beta-xylanase/feruloyl esterase (Xylanibacter ruminicola (strain ATCC 19189 / DSM 19721 / CIP 105475 / JCM 8958 / 23) (Prevotella ruminicola)).